A 342-amino-acid polypeptide reads, in one-letter code: UDP-glucuronic acid decarboxylase 3 (342 aa).

A compositionally biased stretch (polar residues) spans 1–11 (MAATSEKQNTT). A disordered region spans residues 1–22 (MAATSEKQNTTKPPPSPSPLRN). Position 61–86 (61–86 (DNYFTGSKENLKKWIGHPRFELIRHD)) interacts with NAD(+). Residue R170 participates in substrate binding. The active-site Proton acceptor is the Y173. Position 173–177 (173–177 (YDEGK)) interacts with NAD(+). N202 serves as a coordination point for substrate. Residue R214 coordinates NAD(+). Residues 215 to 219 (VVSNF), 232 to 239 (QKPGTQTR), and 299 to 303 (DPRQR) each bind substrate.

The protein belongs to the NAD(P)-dependent epimerase/dehydratase family. UDP-glucuronic acid decarboxylase subfamily. It depends on NAD(+) as a cofactor. Ubiquitous.

The protein resides in the cytoplasm. It catalyses the reaction UDP-alpha-D-glucuronate + H(+) = UDP-alpha-D-xylose + CO2. The protein operates within nucleotide-sugar biosynthesis; UDP-alpha-D-xylose biosynthesis; UDP-alpha-D-xylose from UDP-alpha-D-glucuronate: step 1/1. Catalyzes the NAD-dependent decarboxylation of UDP-glucuronic acid to UDP-xylose. Necessary for the biosynthesis of the core tetrasaccharide in glycosaminoglycan biosynthesis. In Arabidopsis thaliana (Mouse-ear cress), this protein is UDP-glucuronic acid decarboxylase 3 (UXS3).